We begin with the raw amino-acid sequence, 197 residues long: Putative AgrB-like protein (197 aa).

The next 4 membrane-spanning stretches (helical) occupy residues 29–49 (FGFT…AVGL), 79–99 (SIGC…VPFA), 102–122 (YAWI…APYY), and 143–163 (ILIV…LVLG).

This sequence belongs to the AgrB family.

The protein localises to the cell membrane. In terms of biological role, may be involved in the proteolytic processing of a quorum sensing system signal molecule precursor. In Halalkalibacterium halodurans (strain ATCC BAA-125 / DSM 18197 / FERM 7344 / JCM 9153 / C-125) (Bacillus halodurans), this protein is Putative AgrB-like protein.